The primary structure comprises 343 residues: MRGLFKSKPRTPADIVRQTRDLLLYADRSNSFPDLRESKREEKMVELSKSIRDLKLILYGNSEAEPVAEACAQLTQEFFKADTLRRLLTSLPNLNLEARKDATQVVANLQRQQVNSRLIAADYLESNIDLMDFLVDGFENTDMALHYGTMFRECIRHQIVAKYVLDSEHVKKFFYYIQLPNFDIAADAAATFKELLTRHKSTVAEFLIKNEDWFFADYNSKLLESTNYITRRQAIKLLGDILLDRSNSAVMTKYVSSMDNLRILMNLLRESSKTIQIEAFHVFKLFVANQNKPSDIANILVANRNKLLRLLADIKPDKEDERFDADKAQVVREIANLKLRELA.

The protein belongs to the Mo25 family.

The protein is Putative MO25-like protein At4g17270 of Arabidopsis thaliana (Mouse-ear cress).